The primary structure comprises 233 residues: tRNA (guanine-N(1)-)-methyltransferase (233 aa).

S-adenosyl-L-methionine contacts are provided by residues Gly-121 and 140–145 (IGDYIL).

Belongs to the RNA methyltransferase TrmD family. As to quaternary structure, homodimer.

The protein localises to the cytoplasm. The catalysed reaction is guanosine(37) in tRNA + S-adenosyl-L-methionine = N(1)-methylguanosine(37) in tRNA + S-adenosyl-L-homocysteine + H(+). Functionally, specifically methylates guanosine-37 in various tRNAs. The protein is tRNA (guanine-N(1)-)-methyltransferase of Endomicrobium trichonymphae.